The sequence spans 217 residues: MAKFETIAAEDRARAGKGVARATRRAGKVPAVIYGAKQEPTLIALDPRIVLREMKRGGWRSRLYEIETASGKARALMRDIQLHPVTDQPEHVDFQRLAAGEPVRVAVNVNFLNELISVGMKRGGVLNVVRHAVEVLCDPDHIPDHFEADLGPLDINDNIRWSDLKGTGEAKPTITDRDFVIATIAPPTVVAEAAPAEGAAAAPAKGAAKGAAKGGKK.

Residues 195 to 211 (PAEGAAAAPAKGAAKGA) show a composition bias toward low complexity. Residues 195 to 217 (PAEGAAAAPAKGAAKGAAKGGKK) are disordered.

This sequence belongs to the bacterial ribosomal protein bL25 family. CTC subfamily. Part of the 50S ribosomal subunit; part of the 5S rRNA/L5/L18/L25 subcomplex. Contacts the 5S rRNA. Binds to the 5S rRNA independently of L5 and L18.

Functionally, this is one of the proteins that binds to the 5S RNA in the ribosome where it forms part of the central protuberance. The polypeptide is Large ribosomal subunit protein bL25 (Acidiphilium cryptum (strain JF-5)).